We begin with the raw amino-acid sequence, 246 residues long: Putative KilA-N domain-containing protein L33 (246 aa).

The KilA-N domain maps to 20–129 (RYTKCQYCDI…AKVSLWIEEW (110 aa)).

The sequence is that of Putative KilA-N domain-containing protein L33 from Acanthamoeba polyphaga mimivirus (APMV).